The following is a 38-amino-acid chain: Turripeptide GpIAa (38 aa).

The protein belongs to the turripeptide family. In terms of tissue distribution, expressed by the venom duct.

The protein localises to the secreted. In Cryptogemma periscelida (Atlantic gem-turris), this protein is Turripeptide GpIAa.